Here is a 429-residue protein sequence, read N- to C-terminus: Adenylosuccinate synthetase (429 aa).

GTP-binding positions include 12 to 18 and 40 to 42; these read GDEGKGK and GHT. D13 (proton acceptor) is an active-site residue. The Mg(2+) site is built by D13 and G40. Residues 13-16, 38-41, T129, R143, Q224, T239, and R303 contribute to the IMP site; these read DEGK and NAGH. H41 serves as the catalytic Proton donor. Residue 299-305 coordinates substrate; the sequence is VTTGRAR. Residues R305, 331 to 333, and 413 to 415 each bind GTP; these read KLD and GVG.

The protein belongs to the adenylosuccinate synthetase family. In terms of assembly, homodimer. It depends on Mg(2+) as a cofactor.

The protein resides in the cytoplasm. It carries out the reaction IMP + L-aspartate + GTP = N(6)-(1,2-dicarboxyethyl)-AMP + GDP + phosphate + 2 H(+). It functions in the pathway purine metabolism; AMP biosynthesis via de novo pathway; AMP from IMP: step 1/2. In terms of biological role, plays an important role in the de novo pathway of purine nucleotide biosynthesis. Catalyzes the first committed step in the biosynthesis of AMP from IMP. The polypeptide is Adenylosuccinate synthetase (Rhodococcus opacus (strain B4)).